A 212-amino-acid polypeptide reads, in one-letter code: Thymidylate kinase (212 aa).

ATP is bound at residue 10-17 (GLEGAGKT).

Belongs to the thymidylate kinase family.

The enzyme catalyses dTMP + ATP = dTDP + ADP. Phosphorylation of dTMP to form dTDP in both de novo and salvage pathways of dTTP synthesis. The protein is Thymidylate kinase of Yersinia pestis bv. Antiqua (strain Antiqua).